A 152-amino-acid polypeptide reads, in one-letter code: Cytochrome c-type biogenesis protein CcmE 2 (152 aa).

Over 1–8 (MNPQRRRR) the chain is Cytoplasmic. The helical; Signal-anchor for type II membrane protein transmembrane segment at 9 to 29 (LWLVLALVLAGGLATTLVAMA) threads the bilayer. The Periplasmic portion of the chain corresponds to 30-152 (LQRNVAYLYT…HQVAPAKVTQ (123 aa)). Heme is bound by residues H123 and Y127.

It belongs to the CcmE/CycJ family.

The protein resides in the cell inner membrane. Heme chaperone required for the biogenesis of c-type cytochromes. Transiently binds heme delivered by CcmC and transfers the heme to apo-cytochromes in a process facilitated by CcmF and CcmH. The polypeptide is Cytochrome c-type biogenesis protein CcmE 2 (Xanthomonas campestris pv. campestris (strain 8004)).